The primary structure comprises 1487 residues: Adhesion G protein-coupled receptor L2 (1487 aa).

Residues 1–25 (MVSSGCRMRSLWFIIIISFSPSTEG) form the signal peptide. Topologically, residues 26 to 855 (FSRAALPFGL…VHHLLLTVIT (830 aa)) are extracellular. The SUEL-type lectin domain occupies 41–130 (SCEGYSIDLR…KYLEVQYECV (90 aa)). The N-linked (GlcNAc...) asparagine glycan is linked to N99. In terms of domain architecture, Olfactomedin-like spans 139 to 398 (VCPGTLKAIV…ILRYSLEFGP (260 aa)). A compositionally biased stretch (polar residues) spans 423–439 (STTSSASQRGPVSSTAA). Residues 423–461 (STTSSASQRGPVSSTAAGPQDGSRGTKPPPAVSTTKIPP) form a disordered region. N-linked (GlcNAc...) asparagine glycosylation is found at N524 and N735. The region spanning 663–841 (TRVSMPTENI…AILMAHREIA (179 aa)) is the GAIN-B domain. 2 cysteine pairs are disulfide-bonded: C792–C823 and C811–C825. The GPS stretch occupies residues 792 to 841 (CSFWNYSERTMMGYWSTQGCKLVDTNKTRTTCACSHLTNFAILMAHREIA). The stachel stretch occupies residues 829 to 841 (TNFAILMAHREIA). A helical transmembrane segment spans residues 856–876 (WVGIVVSLVCLAICIFTFCFF). Residues 877–884 (RGLQSDRN) lie on the Cytoplasmic side of the membrane. Residues 885-905 (TIHKNLCINLFIAEFIFLIGI) traverse the membrane as a helical segment. Over 906-911 (DKTKYT) the chain is Extracellular. A helical membrane pass occupies residues 912–932 (IACPVFAGLLHFFFLAAFSWM). The Cytoplasmic portion of the chain corresponds to 933 to 955 (CLEGVQLYLMLVEVFESEYSRKK). Residues 956-976 (YYYVAGYLFPATVVGVSAAID) form a helical membrane-spanning segment. The Extracellular portion of the chain corresponds to 977–994 (YKSYGTVQACWLHVDNYF). The helical transmembrane segment at 995 to 1015 (IWSFIGPVTFIILLNIIFLVI) threads the bilayer. The Cytoplasmic segment spans residues 1016–1064 (TLCKMVKHSNTLKPDSSRLENINNYRVCDGYYNTDLPGYEDNKPFIKSW). The helical transmembrane segment at 1065–1085 (VLGAFALLCLLGLTWSFGLLF) threads the bilayer. The Extracellular portion of the chain corresponds to 1086-1090 (VNEET). The helical transmembrane segment at 1091–1111 (VVMAYLFTAFNAFQGLFIFIF) threads the bilayer. The tract at residues 1386–1430 (EADDHLQSPNRDSLYTSMPNLRDSPYPESSPDMAEDLSPSRRSEN) is disordered. Over residues 1392 to 1404 (QSPNRDSLYTSMP) the composition is skewed to polar residues. Phosphoserine occurs at positions 1402, 1437, and 1458.

Belongs to the G-protein coupled receptor 2 family. Adhesion G-protein coupled receptor (ADGR) subfamily. Heterodimer of 2 chains generated by proteolytic processing; the large extracellular N-terminal fragment and the membrane-bound C-terminal fragment predominantly remain associated and non-covalently linked. In terms of processing, autoproteolytically processed at the GPS region of the GAIN-B domain; this cleavage modulates receptor activity. Ubiquitously expressed. In neurons, specifically localizes to dendritic domains of CA1 pyramidal neurons in the S. lacunosummoleculare.

It is found in the postsynaptic cell membrane. Forms a heterodimer of 2 chains generated by proteolytic processing that remain associated through non-covalent interactions mediated by the GAIN-B domain. In the inactivated receptor, the Stachel sequence (also named stalk) is embedded in the GAIN-B domain, where it adopts a beta-strand conformation. On activation, the Stachel moves into the 7 transmembrane region and adopts a twisted hook-shaped configuration that forms contacts within the receptor, leading to coupling of a G-alpha protein, which activates signaling. The cleaved GAIN-B and N-terminal domains can then dissociate from the rest of the receptor. Functionally, orphan adhesion G-protein coupled receptor (aGPCR), which mediates synapse specificity. Ligand binding causes a conformation change that triggers signaling via guanine nucleotide-binding proteins (G proteins) and modulates the activity of downstream effectors. Following G-protein coupled receptor activation, associates with cell adhesion molecules that are expressed at the surface of adjacent cells to direct synapse specificity. Specifically mediates the establishment of perforant-path synapses on CA1-region pyramidal neurons in the hippocampus. Localizes to postsynaptic spines in excitatory synapses in the S.lacunosum-moleculare and interacts with presynaptic cell adhesion molecules, such as teneurins, promoting synapse formation. The polypeptide is Adhesion G protein-coupled receptor L2 (Mus musculus (Mouse)).